The chain runs to 313 residues: Ribosomal RNA small subunit methyltransferase H (313 aa).

S-adenosyl-L-methionine contacts are provided by residues 35-37, D55, F79, D101, and Q108; that span reads GGH. A disordered region spans residues 276 to 300; it reads QGGPTLKSVGKMMPPDDEVADNPRA.

This sequence belongs to the methyltransferase superfamily. RsmH family.

Its subcellular location is the cytoplasm. The catalysed reaction is cytidine(1402) in 16S rRNA + S-adenosyl-L-methionine = N(4)-methylcytidine(1402) in 16S rRNA + S-adenosyl-L-homocysteine + H(+). Functionally, specifically methylates the N4 position of cytidine in position 1402 (C1402) of 16S rRNA. This chain is Ribosomal RNA small subunit methyltransferase H, found in Dickeya chrysanthemi (strain Ech1591) (Dickeya zeae (strain Ech1591)).